The primary structure comprises 177 residues: Large ribosomal subunit protein uL6 (177 aa).

It belongs to the universal ribosomal protein uL6 family. In terms of assembly, part of the 50S ribosomal subunit.

Its function is as follows. This protein binds to the 23S rRNA, and is important in its secondary structure. It is located near the subunit interface in the base of the L7/L12 stalk, and near the tRNA binding site of the peptidyltransferase center. This chain is Large ribosomal subunit protein uL6, found in Ectopseudomonas mendocina (strain ymp) (Pseudomonas mendocina).